Here is a 365-residue protein sequence, read N- to C-terminus: NAD(P)H-quinone oxidoreductase subunit 1, chloroplastic (365 aa).

Helical transmembrane passes span 32-52, 98-118, 129-149, 257-279, 302-322, and 338-358; these read LFPI…IVWL, YLFS…YLII, LSIG…GLLM, LFYV…LYLG, VFGT…FLFI, and LLNL…LLTT.

This sequence belongs to the complex I subunit 1 family. In terms of assembly, NDH is composed of at least 16 different subunits, 5 of which are encoded in the nucleus.

It localises to the plastid. It is found in the chloroplast thylakoid membrane. The enzyme catalyses a plastoquinone + NADH + (n+1) H(+)(in) = a plastoquinol + NAD(+) + n H(+)(out). It carries out the reaction a plastoquinone + NADPH + (n+1) H(+)(in) = a plastoquinol + NADP(+) + n H(+)(out). Functionally, NDH shuttles electrons from NAD(P)H:plastoquinone, via FMN and iron-sulfur (Fe-S) centers, to quinones in the photosynthetic chain and possibly in a chloroplast respiratory chain. The immediate electron acceptor for the enzyme in this species is believed to be plastoquinone. Couples the redox reaction to proton translocation, and thus conserves the redox energy in a proton gradient. The polypeptide is NAD(P)H-quinone oxidoreductase subunit 1, chloroplastic (Spinacia oleracea (Spinach)).